We begin with the raw amino-acid sequence, 502 residues long: Cytochrome P450 71B16 (502 aa).

The helical transmembrane segment at 1–21 (MAISLLCLFLITLVSLIFVVK) threads the bilayer. Cys444 contacts heme.

Belongs to the cytochrome P450 family. It depends on heme as a cofactor.

The protein resides in the membrane. The protein is Cytochrome P450 71B16 (CYP71B16) of Arabidopsis thaliana (Mouse-ear cress).